We begin with the raw amino-acid sequence, 361 residues long: tRNA/tmRNA (uracil-C(5))-methyltransferase (361 aa).

S-adenosyl-L-methionine-binding residues include Q185, Y213, N218, E234, and D294. The active-site Nucleophile is C319. Catalysis depends on E353, which acts as the Proton acceptor.

It belongs to the class I-like SAM-binding methyltransferase superfamily. RNA M5U methyltransferase family. TrmA subfamily.

The enzyme catalyses uridine(54) in tRNA + S-adenosyl-L-methionine = 5-methyluridine(54) in tRNA + S-adenosyl-L-homocysteine + H(+). It catalyses the reaction uridine(341) in tmRNA + S-adenosyl-L-methionine = 5-methyluridine(341) in tmRNA + S-adenosyl-L-homocysteine + H(+). In terms of biological role, dual-specificity methyltransferase that catalyzes the formation of 5-methyluridine at position 54 (m5U54) in all tRNAs, and that of position 341 (m5U341) in tmRNA (transfer-mRNA). The sequence is that of tRNA/tmRNA (uracil-C(5))-methyltransferase from Pseudomonas savastanoi pv. phaseolicola (strain 1448A / Race 6) (Pseudomonas syringae pv. phaseolicola (strain 1448A / Race 6)).